The sequence spans 291 residues: MTTLAIDIGGTKLAAALIGADGQIRDRRELPTPASQTPEALRDALSALVSPLQAHAQRVAIASTGIIRDGSLLALNPHNLGGLLHFPLVKTLEQLTDLPTIAINDAQAAAWAEYQALEGDVTEMVFITVSTGVGGGVVSGGKLLTGPGGLAGHIGHTLADPHGPVCGCGRTGCVEAIASGRGIAAAAQGELAGADARTIFTRAGQGDEQAQQLIHRSARTLARLIADIKATTDCQCVVVGGSVGLAEGYLALVETYLAQEPAAFHVDLLAAHYRHDAGLLGAALLAQGEKL.

ATP is bound by residues 5-12 and 132-139; these read AIDIGGTK and GVGGGVVS. Residues His-156, Cys-166, Cys-168, and Cys-173 each coordinate Zn(2+).

This sequence belongs to the ROK (NagC/XylR) family. NanK subfamily. In terms of assembly, homodimer.

The enzyme catalyses an N-acyl-D-mannosamine + ATP = an N-acyl-D-mannosamine 6-phosphate + ADP + H(+). It participates in amino-sugar metabolism; N-acetylneuraminate degradation; D-fructose 6-phosphate from N-acetylneuraminate: step 2/5. In terms of biological role, catalyzes the phosphorylation of N-acetylmannosamine (ManNAc) to ManNAc-6-P. The polypeptide is N-acetylmannosamine kinase (Escherichia coli O139:H28 (strain E24377A / ETEC)).